Here is a 262-residue protein sequence, read N- to C-terminus: ATP synthase subunit a (262 aa).

Helical transmembrane passes span 50-70 (TMIM…ACTK), 107-127 (MMPI…LGLI), 141-161 (FGLA…ANGV), 194-214 (LYGN…LINI), 218-238 (VFGG…VGFV), and 239-259 (QAFV…AHEA).

The protein belongs to the ATPase A chain family. F-type ATPases have 2 components, CF(1) - the catalytic core - and CF(0) - the membrane proton channel. CF(1) has five subunits: alpha(3), beta(3), gamma(1), delta(1), epsilon(1). CF(0) has three main subunits: a(1), b(2) and c(9-12). The alpha and beta chains form an alternating ring which encloses part of the gamma chain. CF(1) is attached to CF(0) by a central stalk formed by the gamma and epsilon chains, while a peripheral stalk is formed by the delta and b chains.

It is found in the cell membrane. Key component of the proton channel; it plays a direct role in the translocation of protons across the membrane. In Desulforamulus reducens (strain ATCC BAA-1160 / DSM 100696 / MI-1) (Desulfotomaculum reducens), this protein is ATP synthase subunit a.